Consider the following 251-residue polypeptide: Small ribosomal subunit protein uS2 (251 aa).

The tract at residues 232–251 (LQTGEEEMAAAEGESEQVEA) is disordered. Positions 235 to 251 (GEEEMAAAEGESEQVEA) are enriched in acidic residues.

The protein belongs to the universal ribosomal protein uS2 family.

The chain is Small ribosomal subunit protein uS2 from Geobacter metallireducens (strain ATCC 53774 / DSM 7210 / GS-15).